We begin with the raw amino-acid sequence, 56 residues long: uncharacterized protein (56 aa).

This is an uncharacterized protein from Acheta domesticus (House cricket).